Reading from the N-terminus, the 1148-residue chain is Maintenance of telomere capping protein 5 (1148 aa).

WD repeat units lie at residues 63-106 (HHIT…SNAI), 112-152 (GHSR…RPFY), 156-195 (SWRS…TPLC), 199-239 (GHVS…TESK), and 299-348 (GHSD…YGKV). Residues 432-543 (EEVSAIGHKF…RFVLGEKVSL (112 aa)) form the RWD domain. S759 is modified (phosphoserine). Positions 963–990 (THNTLNGSSKFTEPAQKQGSRAISSSPF) are disordered. The segment covering 964–990 (HNTLNGSSKFTEPAQKQGSRAISSSPF) has biased composition (polar residues).

This sequence belongs to the WD repeat WDR59 family. As to quaternary structure, component of the SEA complex composed of at least IML1/SEA1, RTC1/SEA2, MTC5/SEA3, NPR2, NPR3, SEA4, SEC13 and SEH1.

It is found in the vacuole membrane. In terms of biological role, component of the SEA complex which coats the vacuolar membrane and is involved in intracellular trafficking, autophagy, response to nitrogen starvation, and amino acid biogenesis. May be involved in telomere capping. The protein is Maintenance of telomere capping protein 5 (MTC5) of Saccharomyces cerevisiae (strain ATCC 204508 / S288c) (Baker's yeast).